The chain runs to 239 residues: Ribosomal RNA small subunit methyltransferase G (239 aa).

S-adenosyl-L-methionine contacts are provided by residues glycine 78, phenylalanine 83, 129–130, and arginine 148; that span reads AE.

This sequence belongs to the methyltransferase superfamily. RNA methyltransferase RsmG family.

The protein resides in the cytoplasm. In terms of biological role, specifically methylates the N7 position of a guanine in 16S rRNA. The chain is Ribosomal RNA small subunit methyltransferase G from Clostridium perfringens (strain 13 / Type A).